The primary structure comprises 200 residues: Methylthioribulose-1-phosphate dehydratase-like protein (200 aa).

It belongs to the aldolase class II family. MtnB subfamily.

This chain is Methylthioribulose-1-phosphate dehydratase-like protein, found in Schizosaccharomyces pombe (strain 972 / ATCC 24843) (Fission yeast).